We begin with the raw amino-acid sequence, 399 residues long: Arginase (399 aa).

Mn(2+) is bound by residues histidine 193, aspartate 216, histidine 218, and aspartate 220. Substrate-binding positions include 218–222 (HADIN), 229–231 (SGN), and aspartate 273. Aspartate 322 and aspartate 324 together coordinate Mn(2+). The substrate site is built by threonine 336 and glutamate 367.

The protein belongs to the arginase family. Mn(2+) is required as a cofactor.

The protein localises to the cytoplasm. The enzyme catalyses L-arginine + H2O = urea + L-ornithine. Its pathway is nitrogen metabolism; urea cycle; L-ornithine and urea from L-arginine: step 1/1. In Eremothecium gossypii (strain ATCC 10895 / CBS 109.51 / FGSC 9923 / NRRL Y-1056) (Yeast), this protein is Arginase (CAR1).